The primary structure comprises 492 residues: Fascin-2 (492 aa).

It belongs to the fascin family. In terms of tissue distribution, localized specifically in the outer and inner segments of the photoreceptor cells in the retina.

It is found in the cytoplasm. It localises to the cytoskeleton. Its subcellular location is the cell projection. The protein resides in the stereocilium. Functionally, acts as an actin bundling protein. May play a pivotal role in photoreceptor cell-specific events, such as disk morphogenesis. This is Fascin-2 (FSCN2) from Homo sapiens (Human).